The chain runs to 447 residues: Cysteine--tRNA ligase (447 aa).

Cys-28 provides a ligand contact to Zn(2+). Positions 30–40 (PTVYNYIHIGN) match the 'HIGH' region motif. 3 residues coordinate Zn(2+): Cys-211, His-236, and Glu-240. A 'KMSKS' region motif is present at residues 268–272 (KMSKS). Position 271 (Lys-271) interacts with ATP.

Belongs to the class-I aminoacyl-tRNA synthetase family. In terms of assembly, monomer. Zn(2+) serves as cofactor.

It is found in the cytoplasm. The enzyme catalyses tRNA(Cys) + L-cysteine + ATP = L-cysteinyl-tRNA(Cys) + AMP + diphosphate. The polypeptide is Cysteine--tRNA ligase (Streptococcus agalactiae serotype Ia (strain ATCC 27591 / A909 / CDC SS700)).